We begin with the raw amino-acid sequence, 148 residues long: MFNKMLVAIDGSDMSAKALDAAVHLAKEQQAELSILHVGREAVVTTSSLTGIVYVPEHFIDEIRNEVKKEGLKILENAKEKAAEKGVQAETIYANGEPAHEILNHAKEKGVSLIVVGSRGISGLKEMMLGSVSHKVSQLSTCPVLIVR.

Positions 1 to 18 (MFNKMLVAIDGSDMSAKA) are cleaved as a signal peptide.

Belongs to the universal stress protein A family.

The sequence is that of Universal stress protein YxiE (yxiE) from Bacillus subtilis (strain 168).